The primary structure comprises 798 residues: MVALPMVLVLLLVLSRGESELDAKIPSTGDATEWRNPHLSMLGSCQPAPSCQKCILSHPSCAWCKQLNFTASGEAEARRCARREELLARGCPLEELEEPRGQQEVLQDQPLSQGARGEGATQLAPQRVRVTLRPGEPQQLQVRFLRAEGYPVDLYYLMDLSYSMKDDLERVRQLGHALLVRLQEVTHSVRIGFGSFVDKTVLPFVSTVPSKLRHPCPTRLERCQSPFSFHHVLSLTGDAQAFEREVGRQSVSGNLDSPEGGFDAILQAALCQEQIGWRNVSRLLVFTSDDTFHTAGDGKLGGIFMPSDGHCHLDSNGLYSRSTEFDYPSVGQVAQALSAANIQPIFAVTSAALPVYQELSKLIPKSAVGELSEDSSNVVQLIMDAYNSLSSTVTLEHSSLPPGVHISYESQCEGPEKREGKAEDRGQCNHVRINQTVTFWVSLQATHCLPEPHLLRLRALGFSEELIVELHTLCDCNCSDTQPQAPHCSDGQGHLQCGVCSCAPGRLGRLCECSVAELSSPDLESGCRAPNGTGPLCSGKGHCQCGRCSCSGQSSGHLCECDDASCERHEGILCGGFGRCQCGVCHCHANRTGRACECSGDMDSCISPEGGLCSGHGRCKCNRCQCLDGYYGALCDQCPGCKTPCERHRDCAECGAFRTGPLATNCSTACAHTNVTLALAPILDDGWCKERTLDNQLFFFLVEDDARGTVVLRVRPQEKGADHTQAIVLGCVGGIVAVGLGLVLAYRLSVEIYDRREYSRFEKEQQQLNWKQDSNPLYKSAITTTINPRFQEADSPTL.

A signal peptide spans Met-1 to Ser-19. Over Glu-20–His-723 the chain is Extracellular. Positions Ser-44–Pro-92 constitute a PSI domain. 7 cysteine pairs are disulfide-bonded: Cys-51–Cys-476, Cys-54–Cys-80, Cys-64–Cys-91, Cys-216–Cys-223, Cys-271–Cys-311, Cys-412–Cys-428, and Cys-448–Cys-474. Residue Asn-68 is glycosylated (N-linked (GlcNAc...) asparagine). Residues Glu-98–Ala-124 are disordered. One can recognise a VWFA domain in the interval Tyr-150–Leu-389. Residues Ser-161 and Ser-163 each coordinate Mg(2+). Ca(2+) is bound by residues Ser-163, Asp-166, Asp-167, and Asp-198. Residues Asn-254, Asp-256, Pro-258, and Glu-259 each contribute to the Ca(2+) site. A Mg(2+)-binding site is contributed by Glu-259. Asn-279 is a glycosylation site (N-linked (GlcNAc...) asparagine). Ca(2+)-binding residues include Asp-289 and Glu-373. Residue Asn-434 is glycosylated (N-linked (GlcNAc...) asparagine). Asn-477 carries an N-linked (GlcNAc...) asparagine glycan. 19 cysteine pairs are disulfide-bonded: Cys-478/Cys-497, Cys-488/Cys-500, Cys-502/Cys-511, Cys-513/Cys-545, Cys-527/Cys-543, Cys-537/Cys-548, Cys-550/Cys-559, Cys-561/Cys-582, Cys-566/Cys-580, Cys-574/Cys-585, Cys-587/Cys-596, Cys-598/Cys-621, Cys-605/Cys-619, Cys-613/Cys-624, Cys-626/Cys-635, Cys-638/Cys-641, Cys-645/Cys-688, Cys-651/Cys-670, and Cys-654/Cys-666. I-EGF domains lie at Cys-478–Glu-512, Cys-513–Glu-560, Cys-561–Glu-597, and Cys-598–Asp-636. Residue Asn-531 is glycosylated (N-linked (GlcNAc...) asparagine). A glycan (N-linked (GlcNAc...) asparagine) is linked at Asn-590. Residues Asn-665 and Asn-674 are each glycosylated (N-linked (GlcNAc...) asparagine). A helical membrane pass occupies residues Thr-724–Tyr-746. Topologically, residues Arg-747 to Leu-798 are cytoplasmic. Tyr-778 bears the Phosphotyrosine; by Tyr-kinases mark.

Belongs to the integrin beta chain family. Heterodimer of an alpha and a beta subunit. ITGB7/beta-7 associates with either ITGA4/alpha-4 or ITGAE/alpha-E. Integrin ITGA4/ITGB7 interacts with MADCAM1. Integrin ITGA4/ITGB7 interacts with VCAM1 and fibronectin. Interacts with FLNA (via filamin repeats 4, 9, 12, 17, 19, 21, and 23). In terms of assembly, (Microbial infection) May interact with HIV-1 gp120. As to expression, expressed in a variety of leukocyte lines.

Its subcellular location is the cell membrane. In terms of biological role, integrin ITGA4/ITGB7 (alpha-4/beta-7) (Peyer patches-specific homing receptor LPAM-1) is an adhesion molecule that mediates lymphocyte migration and homing to gut-associated lymphoid tissue (GALT). Integrin ITGA4/ITGB7 interacts with the cell surface adhesion molecules MADCAM1 which is normally expressed by the vascular endothelium of the gastrointestinal tract. Also interacts with VCAM1 and fibronectin, an extracellular matrix component. It recognizes one or more domains within the alternatively spliced CS-1 region of fibronectin. Interactions involve the tripeptide L-D-T in MADCAM1, and L-D-V in fibronectin. Integrin ITGAE/ITGB7 (alpha-E/beta-7, HML-1) is a receptor for E-cadherin. Its function is as follows. (Microbial infection) Binds to HIV-1 gp120, thereby allowing the virus to enter GALT, which is thought to be the major trigger of AIDS disease. Interaction would involve a tripeptide L-D-I in HIV-1 gp120. The chain is Integrin beta-7 (ITGB7) from Homo sapiens (Human).